We begin with the raw amino-acid sequence, 166 residues long: Interferon gamma-related (166 aa).

Positions 1 to 26 (MYCRLNMVYLICALLLIVSLQGTVGA) are cleaved as a signal peptide. Asparagine 91 carries N-linked (GlcNAc...) asparagine glycosylation.

The protein belongs to the type II (or gamma) interferon family. As to quaternary structure, homodimer. In terms of tissue distribution, strongly expressed in spleen. Also detected at lower levels in gill, kidney, heart, brain and intestine. In immune cell populations, expressed at highest levels in peripheral blood leukocytes and at lower levels in splenocytes, granulocytes, monocytes and macrophages.

It is found in the secreted. In terms of biological role, cytokine which binds to interferon gamma receptor 1 (ifngr1). Has activating effects on primary macrophages. Induces nitric oxide production and phagocytic responses in macrophages. Primes monocytes for production of reactive oxygen intermediates (ROI), although the effect is short-lived. Also has inhibitory effects on monocyte priming by ifng1 (interferon gamma 1) and tnfb (TNF-alpha 2). Stimulates phosphorylation of the JAK/STAT signal transducer stat1, but fails to induce stat1 nuclear localization. Promotes increased expression of a number of genes important for macrophage activity, including the interferon regulatory factors irf2 and irf9. This is Interferon gamma-related from Carassius auratus (Goldfish).